Consider the following 1182-residue polypeptide: MEYLLFLLLFAGFLTFLPRFLIYAQITSSTTTTTPVPAANRRTIRVGVAAVQTTELDSIGWPMSGGAINMAIQKLRDDGFIAPFDFEVTVNYTECDRSLGAAVGMEFMRTKRLDVVIGPPCRDPMEIMATMATYYSTPMLGWGLVTDSKFTDTERYPYLTNIMANSLSLGFSLVKLLEMMEWDRVALVYEESAQDYPLSVINDVETAINEYDTFAVNVVVKQALPGGDLNDAQYISVLNRIKLRCRIIVSVFQTAPTRRRYLKMIDQQGMANEEYVHILLGLRSIGFGKQSAGLTKCELNCLSSGLAPFWDIAPDDGLNDRLKQAATRMLVMDLSTDVPDINYLNTFTMNCGAVVVNPPVSCATPACINASTSPPSAFARSLHDVFYLYGLAITNLYNQDPAYLNDIDKINGALQLNFAGLTGEVSINANNSRVPKLMLYALNDKYDQASFMNLTYSLNGGAVSVSLAYTNEASLWYWYGGKRPLSVPVCGFAGTDCPQSFVDQYGALVFAIGGVLIFAMLFVITCFFYVMRQKRLERDRIDAEWQIPLVKLQAPPKRDKERMSKRSLQSGPSNITDTSKMTFDNTFSNYSIFYLDKEPVLSTAHPASNLIRTDYDTFVRLRKLDHENVNKFVGMSIDGPEYLAVWKLCMRGSLQDIIGQGNFSIDPFFMFCVIRDMAEGLKYLHNSFLHVHANLRSGTVLVNESWQAKLTDFGLGTLAEEKKPMKRRQLWMAPEVIRGTLLPHQIEKSADIYSLAVIASEVLTRKEAWNMAERKDTVDEIVYRIKKGGPNAPRPELDMDGVEINHNLLILIRDCWSEEPADRPSADVICNLLKNMMPKKGNLMDHVFNILEDYTTNLEVEVEDRTKELTAEKKKADVLLGRMLPKQVAERLKQGQTVEPEGFDSVTVFFSDVVKFTQLAAKCSPFQVVNLLNDLYSNFDAIIEEHGCYKVESIGDGYLCVSGLPSKNGNAHIKQIVELSLDFMSYCKSFKIPHLPREKVELRIGVNSGPCVAGVVGLSMPRYCLFGDTVNTASRMESNGKASHIHLSAASYTLLMKHYPNQYNTASRGDVIIKGKGVMETFWVFERNNQFMGVSSNSGYQSDKKATNNGSSPESTPPSTPPMHEVKANSPVRHRKPPSPSSPTLSKRSVSPIMEAKARDIHNEETEALYRQFRRQETLALI.

Residues 1–24 form the signal peptide; it reads MEYLLFLLLFAGFLTFLPRFLIYA. Topologically, residues 25 to 507 are extracellular; it reads QITSSTTTTT…PQSFVDQYGA (483 aa). Asparagine 91, asparagine 369, asparagine 430, and asparagine 453 each carry an N-linked (GlcNAc...) asparagine glycan. The helical transmembrane segment at 508-528 threads the bilayer; sequence LVFAIGGVLIFAMLFVITCFF. Over 529–1182 the chain is Cytoplasmic; that stretch reads YVMRQKRLER…FRRQETLALI (654 aa). A Protein kinase domain is found at 562–849; it reads RMSKRSLQSG…KGNLMDHVFN (288 aa). Residues 907 to 1037 enclose the Guanylate cyclase domain; sequence TVFFSDVVKF…DTVNTASRME (131 aa). The tract at residues 1094 to 1164 is disordered; that stretch reads VSSNSGYQSD…EAKARDIHNE (71 aa). Residues 1142–1152 show a composition bias toward low complexity; that stretch reads SPTLSKRSVSP.

This sequence belongs to the adenylyl cyclase class-4/guanylyl cyclase family. As to expression, expressed in IL2 sensory neurons.

It is found in the cell membrane. It carries out the reaction GTP = 3',5'-cyclic GMP + diphosphate. Functionally, guanylate cyclase involved in the production of the second messenger cGMP. The polypeptide is Receptor-type guanylate cyclase gcy-19 (Caenorhabditis elegans).